Consider the following 257-residue polypeptide: UPF0246 protein Sama_0917 (257 aa).

Belongs to the UPF0246 family.

This chain is UPF0246 protein Sama_0917, found in Shewanella amazonensis (strain ATCC BAA-1098 / SB2B).